Here is a 747-residue protein sequence, read N- to C-terminus: Histone-lysine N-methyltransferase EZH1 (747 aa).

Residues 186-229 (YSDEDEEGHNDTSDGKQDDSKEDLPVTRKRKRHAIEGSKKSSKK) are disordered. Positions 194–211 (HNDTSDGKQDDSKEDLPV) are enriched in basic and acidic residues. A Glycyl lysine isopeptide (Lys-Gly) (interchain with G-Cter in SUMO2) cross-link involves residue K327. The segment at 375 to 421 (TSASAVAETKEGDSDRDTGNDWASSSSEANSRCQTPTKQKASPAPPQ) is disordered. Residues 382–393 (ETKEGDSDRDTG) are compositionally biased toward basic and acidic residues. The span at 395-414 (DWASSSSEANSRCQTPTKQK) shows a compositional bias: polar residues. Positions 504–606 (CRKIQLKKDN…CKVVSCKNCS (103 aa)) constitute a CXC domain. Residues 613–728 (KHLLLAPSDV…AGEELFFDYR (116 aa)) form the SET domain.

The protein belongs to the class V-like SAM-binding methyltransferase superfamily. Histone-lysine methyltransferase family. EZ subfamily. As to quaternary structure, component of the PRC2/EED-EZH1 complex, which includes EED, EZH1, SUZ12, RBBP4 and AEBP2. The PRC2/EED-EZH1 is less abundant than the PRC2/EED-EZH2 complex, has weak methyltransferase activity and compacts chromatin in the absence of the methyltransferase cofactor S-adenosyl-L-methionine (SAM). Interacts with EZHIP; the interaction blocks EZH1 methyltransferase activity.

It is found in the nucleus. The catalysed reaction is L-lysyl(27)-[histone H3] + 3 S-adenosyl-L-methionine = N(6),N(6),N(6)-trimethyl-L-lysyl(27)-[histone H3] + 3 S-adenosyl-L-homocysteine + 3 H(+). Polycomb group (PcG) protein. Catalytic subunit of the PRC2/EED-EZH1 complex, which methylates 'Lys-27' of histone H3, leading to transcriptional repression of the affected target gene. Able to mono-, di- and trimethylate 'Lys-27' of histone H3 to form H3K27me1, H3K27me2 and H3K27me3, respectively. Required for embryonic stem cell derivation and self-renewal, suggesting that it is involved in safeguarding embryonic stem cell identity. Compared to EZH2-containing complexes, it is less abundant in embryonic stem cells, has weak methyltransferase activity and plays a less critical role in forming H3K27me3, which is required for embryonic stem cell identity and proper differentiation. The sequence is that of Histone-lysine N-methyltransferase EZH1 (EZH1) from Bos taurus (Bovine).